The chain runs to 376 residues: CC-adding tRNA nucleotidyltransferase (376 aa).

A CTP-binding site is contributed by Gly-26–Arg-29. Residues Asp-39 and Asp-41 each contribute to the Mg(2+) site. CTP-binding positions include Arg-94–Asp-95, Asn-99, Asp-136–Arg-145, and Arg-176.

This sequence belongs to the tRNA nucleotidyltransferase/poly(A) polymerase family. The cofactor is Mg(2+).

The catalysed reaction is a tRNA precursor + 2 CTP = a tRNA with a 3' CC end + 2 diphosphate. Its function is as follows. tRNA nucleotidyltransferase involved in the synthesis of the tRNA CCA terminus. Adds the two cytidine residues to tRNA. This chain is CC-adding tRNA nucleotidyltransferase, found in Shouchella clausii (strain KSM-K16) (Alkalihalobacillus clausii).